The sequence spans 371 residues: Bifunctional enzyme IspD/IspF (371 aa).

The interval 1-214 (MNSCFIILAG…NSDIKFNNLI (214 aa)) is 2-C-methyl-D-erythritol 4-phosphate cytidylyltransferase. The tract at residues 215-371 (KFGIGFDVHR…EVIASVIKND (157 aa)) is 2-C-methyl-D-erythritol 2,4-cyclodiphosphate synthase. Asp221 and His223 together coordinate a divalent metal cation. 4-CDP-2-C-methyl-D-erythritol 2-phosphate contacts are provided by residues 221 to 223 (DVH) and 247 to 248 (HS). His255 contacts a divalent metal cation. 4-CDP-2-C-methyl-D-erythritol 2-phosphate-binding positions include 269 to 271 (DIG), 274 to 278 (FSDKN), and Lys355.

The protein in the N-terminal section; belongs to the IspD/TarI cytidylyltransferase family. IspD subfamily. It in the C-terminal section; belongs to the IspF family. Requires a divalent metal cation as cofactor.

The catalysed reaction is 2-C-methyl-D-erythritol 4-phosphate + CTP + H(+) = 4-CDP-2-C-methyl-D-erythritol + diphosphate. It catalyses the reaction 4-CDP-2-C-methyl-D-erythritol 2-phosphate = 2-C-methyl-D-erythritol 2,4-cyclic diphosphate + CMP. Its pathway is isoprenoid biosynthesis; isopentenyl diphosphate biosynthesis via DXP pathway; isopentenyl diphosphate from 1-deoxy-D-xylulose 5-phosphate: step 2/6. The protein operates within isoprenoid biosynthesis; isopentenyl diphosphate biosynthesis via DXP pathway; isopentenyl diphosphate from 1-deoxy-D-xylulose 5-phosphate: step 4/6. Bifunctional enzyme that catalyzes the formation of 4-diphosphocytidyl-2-C-methyl-D-erythritol from CTP and 2-C-methyl-D-erythritol 4-phosphate (MEP) (IspD), and catalyzes the conversion of 4-diphosphocytidyl-2-C-methyl-D-erythritol 2-phosphate (CDP-ME2P) to 2-C-methyl-D-erythritol 2,4-cyclodiphosphate (ME-CPP) with a corresponding release of cytidine 5-monophosphate (CMP) (IspF). In Pelagibacter ubique (strain HTCC1062), this protein is Bifunctional enzyme IspD/IspF.